Consider the following 579-residue polypeptide: uncharacterized protein (579 aa).

The disordered stretch occupies residues 1–100; it reads MSGRRRNHPG…APPCGPYPGE (100 aa). Residues 80-90 are compositionally biased toward polar residues; that stretch reads GQQQSEPQHNS. A run of 11 helical transmembrane segments spans residues 148–168, 175–195, 206–226, 228–248, 279–299, 303–323, 378–398, 407–427, 448–468, 504–524, and 526–546; these read FAVD…AAAS, VALY…LIGP, VALA…IMNY, GATG…MMVL, VFGL…VEFV, LFKL…GALL, LWGN…PAFV, WVQL…NFAG, IAVT…MTTI, SEST…MVYT, and LWVG…QTVV.

The protein to M.tuberculosis Rv0876c.

Its subcellular location is the cell membrane. This is an uncharacterized protein from Mycobacterium leprae (strain TN).